The chain runs to 430 residues: Dihydroorotase (430 aa).

His-61 and His-63 together coordinate Zn(2+). Substrate-binding positions include 63 to 65 and Asn-95; that span reads HLR. The Zn(2+) site is built by Asp-153, His-180, and His-233. A substrate-binding site is contributed by Asn-279. Asp-306 lines the Zn(2+) pocket. Asp-306 is a catalytic residue. Residue His-310 coordinates substrate.

Belongs to the metallo-dependent hydrolases superfamily. DHOase family. Class I DHOase subfamily. The cofactor is Zn(2+).

The catalysed reaction is (S)-dihydroorotate + H2O = N-carbamoyl-L-aspartate + H(+). Its pathway is pyrimidine metabolism; UMP biosynthesis via de novo pathway; (S)-dihydroorotate from bicarbonate: step 3/3. In terms of biological role, catalyzes the reversible cyclization of carbamoyl aspartate to dihydroorotate. In Caldicellulosiruptor saccharolyticus (strain ATCC 43494 / DSM 8903 / Tp8T 6331), this protein is Dihydroorotase.